The following is a 945-amino-acid chain: Kinesin-like protein KIN-7F (945 aa).

In terms of domain architecture, Kinesin motor spans 34-356; the sequence is RILVSVRLRP…LLFASCAKEV (323 aa). 120-127 serves as a coordination point for ATP; the sequence is GQTSSGKT. The stretch at 365-437 forms a coiled coil; sequence VMSDKALVKQ…QDLLQVVGDN (73 aa). 2 disordered regions span residues 484 to 512 and 553 to 588; these read RRVA…SVSS and NECL…MNSR. Composition is skewed to polar residues over residues 495–512 and 560–587; these read QAEN…SVSS and AVGS…SMNS.

It belongs to the TRAFAC class myosin-kinesin ATPase superfamily. Kinesin family. KIN-7 subfamily. Binds microtubules.

Its function is as follows. Binds ATP/ADP in vitro. Possesses low ATPase activity but high affinity for microtubules. This is Kinesin-like protein KIN-7F from Oryza sativa subsp. japonica (Rice).